We begin with the raw amino-acid sequence, 159 residues long: Bacterioferritin (159 aa).

Positions 1–145 constitute a Ferritin-like diiron domain; the sequence is MQGDPDVLRL…TQLALMGQLG (145 aa). Positions 18 and 51 each coordinate Fe cation. Met52 is a heme b binding site. Residues His54, Glu94, Glu127, and His130 each coordinate Fe cation.

Belongs to the bacterioferritin family. As to quaternary structure, homooligomer of 24 subunits, arranged as 12 dimers, that are packed together to form an approximately spherical molecule with a central cavity, in which large amounts of iron can be deposited. The cofactor is heme b.

It localises to the cytoplasm. The protein resides in the cytosol. It is found in the membrane. The catalysed reaction is 4 Fe(2+) + O2 + 4 H(+) = 4 Fe(3+) + 2 H2O. The enzyme catalyses Fe(2+)(in) = Fe(2+)(out). Iron-storage protein, whose ferroxidase center binds Fe(2+), oxidizes it using dioxygen to Fe(3+), and participates in the subsequent Fe(3+) oxide mineral core formation within the central cavity of the BFR protein shell. Probably plays a crucial role in the intracellular existence of this organism by functioning as a temporary depository for iron in iron deprivation. The chain is Bacterioferritin (bfr) from Mycobacterium leprae (strain TN).